The following is a 422-amino-acid chain: L-threonine dehydratase biosynthetic IlvA (422 aa).

K60 is subject to N6-(pyridoxal phosphate)lysine. Pyridoxal 5'-phosphate is bound by residues N87, G190–L194, and S315. In terms of domain architecture, ACT-like spans H339–K413.

The protein belongs to the serine/threonine dehydratase family. As to quaternary structure, homotetramer. The cofactor is pyridoxal 5'-phosphate.

It catalyses the reaction L-threonine = 2-oxobutanoate + NH4(+). The protein operates within amino-acid biosynthesis; L-isoleucine biosynthesis; 2-oxobutanoate from L-threonine: step 1/1. Catalyzes the anaerobic formation of alpha-ketobutyrate and ammonia from threonine in a two-step reaction. The first step involved a dehydration of threonine and a production of enamine intermediates (aminocrotonate), which tautomerizes to its imine form (iminobutyrate). Both intermediates are unstable and short-lived. The second step is the nonenzymatic hydrolysis of the enamine/imine intermediates to form 2-ketobutyrate and free ammonia. In the low water environment of the cell, the second step is accelerated by RidA. The protein is L-threonine dehydratase biosynthetic IlvA (ilvA) of Bacillus subtilis (strain 168).